A 360-amino-acid polypeptide reads, in one-letter code: 3-dehydroquinate synthase (360 aa).

NAD(+) contacts are provided by residues 71-76 (DGEQYK), 105-109 (GVVGD), 129-130 (TT), lysine 142, lysine 151, and 169-172 (TLNT). Glutamate 184, histidine 248, and histidine 265 together coordinate Zn(2+).

Belongs to the sugar phosphate cyclases superfamily. Dehydroquinate synthase family. Requires Co(2+) as cofactor. Zn(2+) serves as cofactor. It depends on NAD(+) as a cofactor.

The protein localises to the cytoplasm. The catalysed reaction is 7-phospho-2-dehydro-3-deoxy-D-arabino-heptonate = 3-dehydroquinate + phosphate. The protein operates within metabolic intermediate biosynthesis; chorismate biosynthesis; chorismate from D-erythrose 4-phosphate and phosphoenolpyruvate: step 2/7. In terms of biological role, catalyzes the conversion of 3-deoxy-D-arabino-heptulosonate 7-phosphate (DAHP) to dehydroquinate (DHQ). The chain is 3-dehydroquinate synthase from Coxiella burnetii (strain CbuG_Q212) (Coxiella burnetii (strain Q212)).